Consider the following 499-residue polypeptide: Cytochrome P450 monooxygenase notH' (499 aa).

The helical transmembrane segment at 11-31 (LGLEPAGWALALLTSSIIYLF) threads the bilayer. 2 N-linked (GlcNAc...) asparagine glycosylation sites follow: Asn-296 and Asn-427. Cys-440 lines the heme pocket.

Belongs to the cytochrome P450 family. The cofactor is heme.

The protein resides in the membrane. It participates in alkaloid biosynthesis. In terms of biological role, cytochrome P450 monooxygenase; part of the gene cluster that mediates the biosynthesis of notoamide, a fungal indole alkaloid that belongs to a family of natural products containing a characteristic bicyclo[2.2.2]diazaoctane core. The first step of notoamide biosynthesis involves coupling of L-proline and L-tryptophan by the bimodular NRPS notE', to produce cyclo-L-tryptophan-L-proline called brevianamide F. The reverse prenyltransferase notF' then acts as a deoxybrevianamide E synthase and converts brevianamide F to deoxybrevianamide E via reverse prenylation at C-2 of the indole ring leading to the bicyclo[2.2.2]diazaoctane core. Deoxybrevianamide E is further hydroxylated at C-6 of the indole ring, likely catalyzed by the cytochrome P450 monooxygenase notG', to yield 6-hydroxy-deoxybrevianamide E. 6-hydroxy-deoxybrevianamide E is a specific substrate of the prenyltransferase notC' for normal prenylation at C-7 to produce 6-hydroxy-7-prenyl-deoxybrevianamide, also called notoamide S. As the proposed pivotal branching point in notoamide biosynthesis, notoamide S can be diverted to notoamide E through an oxidative pyran ring closure putatively catalyzed by either notH' cytochrome P450 monooxygenase or the notD' FAD-linked oxidoreductase. This step would be followed by an indole 2,3-epoxidation-initiated pinacol-like rearrangement catalyzed by the notB' FAD-dependent monooxygenase leading to the formation of notoamide C and notoamide D. On the other hand notoamide S is converted to notoamide T by notH' (or notD'), a bifunctional oxidase that also functions as the intramolecular Diels-Alderase responsible for generation of (-)-notoamide T. To generate antipodal (+)-notoaminide T, notH (or notD) in Aspergillus strain MF297-2 is expected to catalyze a Diels-Alder reaction leading to the opposite stereochemistry. The remaining oxidoreductase notD' (or notH') likely catalyzes the oxidative pyran ring formation to yield (-)-stephacidin A. The FAD-dependent monooxygenase notI' is highly similar to notB' and is predicted to catalyze a similar conversion from (-)-stephacidin A to (+)-notoamide B via the 2,3-epoxidation of (-)-stephacidin A followed by a pinacol-type rearrangement. Finally, it remains unclear which enzyme could be responsible for the final hydroxylation steps leading to notoamide A and sclerotiamide. The chain is Cytochrome P450 monooxygenase notH' from Aspergillus versicolor.